The following is an 89-amino-acid chain: UPF0367 protein CYA_1023 (89 aa).

Positions 69 to 89 (TKSGGPGAPGTRPGFLAQLQG) are disordered.

Belongs to the UPF0367 family.

The chain is UPF0367 protein CYA_1023 from Synechococcus sp. (strain JA-3-3Ab) (Cyanobacteria bacterium Yellowstone A-Prime).